The following is a 341-amino-acid chain: MRIVIFIFGILLTSCFSRNGIESSSKKIKISMLVDGVLDDKSFNSSANEALLRLKKDFPENIEEVFSCAISGVYSSYVSDLDNLKRNGSDLIWLVGYMLTDASLLVSSENPKISYGIIDPIYGDDVQIPENLIAVVFRVEQGAFLAGYIAAKKSFSGKIGFIGGMKGNIVDAFRYGYESGAKYANKDIEIISEYSNSFSDVDIGRTIASKMYSKGIDVIHFAAGLAGIGVIEAAKNLGDGYYVIGADQDQSYLAPKNFITSVIKNIGDALYLITGEYIKNNNVWEGGKVVQMGLRDGVIGLPNANEFEYIKVLERKIVNKEIIVPCNQEEYEIFIKQILKL.

Residues 1–14 (MRIVIFIFGILLTS) form the signal peptide. Cysteine 15 is lipidated: N-palmitoyl cysteine. Cysteine 15 is lipidated: S-diacylglycerol cysteine.

The protein belongs to the BMP lipoprotein family. Monomer.

The protein localises to the cell inner membrane. In terms of biological role, may be part of an ABC-type nucleoside uptake system involved in the purine salvage pathway. The sequence is that of Basic membrane protein B (bmpB) from Borreliella burgdorferi (strain ATCC 35210 / DSM 4680 / CIP 102532 / B31) (Borrelia burgdorferi).